Consider the following 138-residue polypeptide: Membrane protein P8A7 (138 aa).

The next 4 membrane-spanning stretches (helical) occupy residues 12–30 (ILVI…YLFV), 32–56 (GLFH…IVLL), 71–90 (YTYW…LILG), and 93–118 (GFFL…LLGC).

It is found in the membrane. The sequence is that of Membrane protein P8A7 (pmpA) from Dictyostelium discoideum (Social amoeba).